The following is a 233-amino-acid chain: Protein lin-7 homolog A (233 aa).

The short motif at M14–D28 is the Kinase interacting site element. In terms of domain architecture, L27 spans L25–G80. The region spanning V108 to P190 is the PDZ domain. A disordered region spans residues L214 to S233.

This sequence belongs to the lin-7 family. Forms a complex with CASK and CASKIN1. Component of the brain-specific heterotrimeric complex (LIN-10-LIN-2-LIN-7 complex) composed of at least APBA1, CASK, and LIN7, which associates with the motor protein KIF17 to transport vesicles along microtubules. Can also interact with other modular proteins containing protein-protein interaction domains like PALS1, PALS2, MPP7, DLG1, DLG2 and DLG3 through its L27 domain. Interacts with DLG4, GRIN2B and MARCHF11 as well as CDH1 and CTNNB1, the channels KCNJ12/Kir2.2, KCNJ4/Kir2.3 and probably KCNJ2/Kir2.1 and SLC6A12/BGT-1 via its PDZ domain. The association of LIN7A with cadherin and beta-catenin is calcium-dependent, occurs at synaptic junctions and requires the actin cytoskeleton. Interacts with EGFR, ERBB2, ERBB3 and ERBB4 with both PDZ and KID domains. Associates with KIF17 via APBA1. Interacts with HTR4. Forms a tripartite complex composed of DLG1, MPP7 and LIN7 (LIN7A or LIN7C). As to expression, expressed in the kidney, along the length of the nephron.

Its subcellular location is the cell membrane. It localises to the basolateral cell membrane. It is found in the cell junction. The protein localises to the postsynaptic density membrane. The protein resides in the tight junction. Its function is as follows. Plays a role in establishing and maintaining the asymmetric distribution of channels and receptors at the plasma membrane of polarized cells. Forms membrane-associated multiprotein complexes that may regulate delivery and recycling of proteins to the correct membrane domains. The tripartite complex composed of LIN7 (LIN7A, LIN7B or LIN7C), CASK and APBA1 associates with the motor protein KIF17 to transport vesicles containing N-methyl-D-aspartate (NMDA) receptor subunit NR2B along microtubules. This complex may have the potential to couple synaptic vesicle exocytosis to cell adhesion in brain. Ensures the proper localization of GRIN2B (subunit 2B of the NMDA receptor) to neuronal postsynaptic density and may function in localizing synaptic vesicles at synapses where it is recruited by beta-catenin and cadherin. Required to localize Kir2 channels, GABA transporter (SLC6A12) and EGFR/ERBB1, ERBB2, ERBB3 and ERBB4 to the basolateral membrane of epithelial cells. This Mus musculus (Mouse) protein is Protein lin-7 homolog A (Lin7a).